The primary structure comprises 303 residues: UDP-3-O-acyl-N-acetylglucosamine deacetylase (303 aa).

The Zn(2+) site is built by H78, H237, and D241. H264 serves as the catalytic Proton donor.

It belongs to the LpxC family. Zn(2+) serves as cofactor.

It catalyses the reaction a UDP-3-O-[(3R)-3-hydroxyacyl]-N-acetyl-alpha-D-glucosamine + H2O = a UDP-3-O-[(3R)-3-hydroxyacyl]-alpha-D-glucosamine + acetate. Its pathway is glycolipid biosynthesis; lipid IV(A) biosynthesis; lipid IV(A) from (3R)-3-hydroxytetradecanoyl-[acyl-carrier-protein] and UDP-N-acetyl-alpha-D-glucosamine: step 2/6. In terms of biological role, catalyzes the hydrolysis of UDP-3-O-myristoyl-N-acetylglucosamine to form UDP-3-O-myristoylglucosamine and acetate, the committed step in lipid A biosynthesis. This chain is UDP-3-O-acyl-N-acetylglucosamine deacetylase, found in Pseudomonas fluorescens (strain Pf0-1).